The following is a 446-amino-acid chain: 23S rRNA (uracil(1939)-C(5))-methyltransferase RlmD (446 aa).

One can recognise a TRAM domain in the interval K6 to E64. [4Fe-4S] cluster contacts are provided by C77, C83, C86, and C165. S-adenosyl-L-methionine-binding residues include Q275, F304, N309, E325, D352, and D377. The Nucleophile role is filled by C403.

It belongs to the class I-like SAM-binding methyltransferase superfamily. RNA M5U methyltransferase family. RlmD subfamily.

It carries out the reaction uridine(1939) in 23S rRNA + S-adenosyl-L-methionine = 5-methyluridine(1939) in 23S rRNA + S-adenosyl-L-homocysteine + H(+). Catalyzes the formation of 5-methyl-uridine at position 1939 (m5U1939) in 23S rRNA. The chain is 23S rRNA (uracil(1939)-C(5))-methyltransferase RlmD from Hahella chejuensis (strain KCTC 2396).